The chain runs to 502 residues: Chromatin structure-remodeling complex protein RSC58 (502 aa).

One can recognise a Bromo domain in the interval 19–134 (SILNAASVKC…KFSSELLLRE (116 aa)). Residues 336–378 (NEEGINRKQNDENNKNVDGKSNGVQDDGGDNDNDATIASANSE) are disordered. The segment covering 339-353 (GINRKQNDENNKNVD) has biased composition (basic and acidic residues).

In terms of assembly, component of the two forms of the RSC complex composed of at least either RSC1 or RSC2, and ARP7, ARP9, LDB7, NPL6, RSC3, RSC30, RSC4, RSC58, RSC6, RSC8, RSC9, SFH1, STH1, HTL1 and probably RTT102. The complexes interact with histone and histone variant components of centromeric chromatin.

The protein localises to the nucleus. Functionally, component of the chromatin structure-remodeling complex (RSC), which is involved in transcription regulation and nucleosome positioning. RSC is responsible for the transfer of a histone octamer from a nucleosome core particle to naked DNA. The reaction requires ATP and involves an activated RSC-nucleosome intermediate. Remodeling reaction also involves DNA translocation, DNA twist and conformational change. As a reconfigurer of centromeric and flanking nucleosomes, RSC complex is required both for proper kinetochore function in chromosome segregation and, via a PKC1-dependent signaling pathway, for organization of the cellular cytoskeleton. The sequence is that of Chromatin structure-remodeling complex protein RSC58 (RSC58) from Saccharomyces cerevisiae (strain ATCC 204508 / S288c) (Baker's yeast).